A 273-amino-acid polypeptide reads, in one-letter code: SUMO-1 cysteine protease S273R (273 aa).

Catalysis depends on residues H168 and N187. Q226 is a binding site for substrate. C232 (nucleophile) is an active-site residue.

Belongs to the peptidase C63 family.

It localises to the host cytoplasm. The protein resides in the virion. In terms of biological role, cysteine protease that plays several role during infection including processing of the structural polyprotein or inhibition of the host immune response. Catalyzes the maturation of the pp220 and pp62 polyprotein precursors into core-shell proteins. Plays a role in the disruption of host pyroptosis via specific cleavage of gasdermin D/GSDMD. In addition, strongly decreases the host cGAS-STING signaling by targeting IKBKE via its enzymatic activity. Also impairs host FOXJ1-mediated antiviral effect via degradation of FOXJ1. The sequence is that of SUMO-1 cysteine protease S273R from Ornithodoros (relapsing fever ticks).